A 331-amino-acid chain; its full sequence is Protein-methionine-sulfoxide reductase catalytic subunit MsrP (331 aa).

Residues 1–54 constitute a signal peptide (tat-type signal); that stretch reads MLIKTDRWLRGDDIPASEITPQHLFDQRRRLLAAAALGAAGAALSPWAARRAFA. Mo-molybdopterin contacts are provided by residues Asn86, 89–90, Cys144, Ser179, Asn227, Arg232, and 243–245; these read YE and SAK.

This sequence belongs to the MsrP family. In terms of assembly, heterodimer of a catalytic subunit (MsrP) and a heme-binding subunit (MsrQ). It depends on Mo-molybdopterin as a cofactor. Predicted to be exported by the Tat system. The position of the signal peptide cleavage has not been experimentally proven.

Its subcellular location is the periplasm. The enzyme catalyses L-methionyl-[protein] + a quinone + H2O = L-methionyl-(S)-S-oxide-[protein] + a quinol. It catalyses the reaction L-methionyl-[protein] + a quinone + H2O = L-methionyl-(R)-S-oxide-[protein] + a quinol. Functionally, part of the MsrPQ system that repairs oxidized periplasmic proteins containing methionine sulfoxide residues (Met-O), using respiratory chain electrons. Thus protects these proteins from oxidative-stress damage caused by reactive species of oxygen and chlorine generated by the host defense mechanisms. MsrPQ is essential for the maintenance of envelope integrity under bleach stress, rescuing a wide series of structurally unrelated periplasmic proteins from methionine oxidation. The catalytic subunit MsrP is non-stereospecific, being able to reduce both (R-) and (S-) diastereoisomers of methionine sulfoxide. The protein is Protein-methionine-sulfoxide reductase catalytic subunit MsrP of Ralstonia nicotianae (strain ATCC BAA-1114 / GMI1000) (Ralstonia solanacearum).